A 129-amino-acid chain; its full sequence is Small ribosomal subunit protein uS8 (129 aa).

Belongs to the universal ribosomal protein uS8 family. In terms of assembly, part of the 30S ribosomal subunit. Contacts proteins S5 and S12.

Functionally, one of the primary rRNA binding proteins, it binds directly to 16S rRNA central domain where it helps coordinate assembly of the platform of the 30S subunit. This Mycoplasma capricolum subsp. capricolum (strain California kid / ATCC 27343 / NCTC 10154) protein is Small ribosomal subunit protein uS8.